Reading from the N-terminus, the 437-residue chain is GTPase Der (437 aa).

EngA-type G domains are found at residues 3 to 168 (PLIA…PETE) and 178 to 353 (IQLA…QNRS). GTP is bound by residues 9-16 (GRPNVGKS), 56-60 (DTGGY), 120-123 (NKVE), 184-191 (GRPNVGKS), 231-235 (DTAGL), and 296-299 (NKWD). Residues 354–437 (RKISTSVLNK…VPISMRFMQK (84 aa)) form the KH-like domain.

The protein belongs to the TRAFAC class TrmE-Era-EngA-EngB-Septin-like GTPase superfamily. EngA (Der) GTPase family. As to quaternary structure, associates with the 50S ribosomal subunit.

In terms of biological role, GTPase that plays an essential role in the late steps of ribosome biogenesis. This chain is GTPase Der, found in Pelodictyon phaeoclathratiforme (strain DSM 5477 / BU-1).